A 248-amino-acid polypeptide reads, in one-letter code: PF03932 family protein CutC (248 aa).

Belongs to the CutC family. As to quaternary structure, homodimer.

It localises to the cytoplasm. The protein is PF03932 family protein CutC of Escherichia coli (strain 55989 / EAEC).